Reading from the N-terminus, the 174-residue chain is Large ribosomal subunit protein bL12cy (174 aa).

The transit peptide at 1 to 45 directs the protein to the chloroplast; that stretch reads MASTTFSSAFSILSLPSSSPSPPPWAPRTLPVANRRRRAAAVAST.

This sequence belongs to the bacterial ribosomal protein bL12 family.

The protein resides in the plastid. It localises to the chloroplast. This chain is Large ribosomal subunit protein bL12cy (RPL12-2), found in Secale cereale (Rye).